The chain runs to 207 residues: Protein N-terminal glutamine amidohydrolase (207 aa).

Residues C30, H83, and D99 contribute to the active site.

This sequence belongs to the NTAQ1 family. Monomer.

The protein localises to the cytoplasm. It is found in the cytosol. It localises to the nucleus. The catalysed reaction is N-terminal L-glutaminyl-[protein] + H2O = N-terminal L-glutamyl-[protein] + NH4(+). Functionally, mediates the side-chain deamidation of N-terminal glutamine residues to glutamate, an important step in N-end rule pathway of protein degradation. Conversion of the resulting N-terminal glutamine to glutamate renders the protein susceptible to arginylation, polyubiquitination and degradation as specified by the N-end rule. Does not act on substrates with internal or C-terminal glutamine and does not act on non-glutamine residues in any position. Does not deaminate acetylated N-terminal glutamine. With the exception of proline, all tested second-position residues on substrate peptides do not greatly influence the activity. In contrast, a proline at position 2, virtually abolishes deamidation of N-terminal glutamine. In Bos taurus (Bovine), this protein is Protein N-terminal glutamine amidohydrolase (NTAQ1).